We begin with the raw amino-acid sequence, 106 residues long: uncharacterized protein (106 aa).

Residues 28 to 68 are disordered; the sequence is SSANEPKKLPNKKLVSTKSHTQVNREKSKNKDTYEDYSDSN. Positions 50–61 are enriched in basic and acidic residues; it reads VNREKSKNKDTY.

This is an uncharacterized protein from Acanthamoeba polyphaga (Amoeba).